A 177-amino-acid chain; its full sequence is Large ribosomal subunit protein uL6 (177 aa).

Belongs to the universal ribosomal protein uL6 family. Part of the 50S ribosomal subunit.

In terms of biological role, this protein binds to the 23S rRNA, and is important in its secondary structure. It is located near the subunit interface in the base of the L7/L12 stalk, and near the tRNA binding site of the peptidyltransferase center. In Chelativorans sp. (strain BNC1), this protein is Large ribosomal subunit protein uL6.